Here is a 350-residue protein sequence, read N- to C-terminus: Cytosolic sulfotransferase 18 (350 aa).

At Met-1 the chain carries N-acetylmethionine. Residues 1–17 show a composition bias toward low complexity; it reads MESETLTAKATITTTTL. The tract at residues 1–28 is disordered; sequence MESETLTAKATITTTTLPSHDETKTEST. Residues 19-28 show a composition bias toward basic and acidic residues; that stretch reads SHDETKTEST. 93 to 98 contributes to the 3'-phosphoadenylyl sulfate binding site; sequence KTGTTW. Residue His-155 is the Proton acceptor of the active site. 3'-phosphoadenylyl sulfate contacts are provided by residues Arg-177, Ser-185, Tyr-243, and 313–315; that span reads RKG.

It belongs to the sulfotransferase 1 family. Expressed in roots, leaves and stems. Barely detected in siliques and flowers.

Its subcellular location is the cytoplasm. It catalyses the reaction an aliphatic (Z)-desulfo-glucosinolate + 3'-phosphoadenylyl sulfate = a (Z)-omega-(methylsulfanyl)-N-sulfo-alkylhydroximate S-glucoside + adenosine 3',5'-bisphosphate + H(+). With respect to regulation, inhibited by phosphoadenosine 5'-phosphate (PAP). In terms of biological role, sulfotransferase that utilizes 3'-phospho-5'-adenylyl sulfate (PAPS) as sulfonate donor to catalyze the sulfate conjugation of desulfo-glucosinolates (dsGSs), the final step in the biosynthesis of the glucosinolate core structure. Preferred substrate are the long-chain desulfo-glucosinolates, 7-methylthioheptyl and 8-methylthiooctyl, derived from methionine. Substrate preference is desulfo-benzyl glucosinolate &gt; desulfo-4-methylthiobutyl glucosinolate &gt; desulfo-6-methylthiohexyl glucosinolate &gt; desulfo-3-methylthiopropyl glucosinolate &gt; desulfo-indol-3-yl methyl glucosinolate &gt; desulfo-singrin &gt; desulfo-3-butenyl glucosinolate. This Arabidopsis thaliana (Mouse-ear cress) protein is Cytosolic sulfotransferase 18 (SOT18).